The primary structure comprises 216 residues: Nucleoid occlusion factor SlmA (216 aa).

The segment at 1–23 is disordered; it reads MAEQLTLDSIEPEPEKQSAKIEK. Over residues 13 to 23 the composition is skewed to basic and acidic residues; that stretch reads EPEKQSAKIEK. The region spanning 28–88 is the HTH tetR-type domain; sequence ERRQQVLTVL…ALIENIESSL (61 aa). Residues 51 to 70 constitute a DNA-binding region (H-T-H motif); it reads TTARLAKEVGVSEAALYRYF.

The protein belongs to the nucleoid occlusion factor SlmA family. In terms of assembly, homodimer. Interacts with FtsZ.

It is found in the cytoplasm. Its subcellular location is the nucleoid. Its function is as follows. Required for nucleoid occlusion (NO) phenomenon, which prevents Z-ring formation and cell division over the nucleoid. Acts as a DNA-associated cell division inhibitor that binds simultaneously chromosomal DNA and FtsZ, and disrupts the assembly of FtsZ polymers. SlmA-DNA-binding sequences (SBS) are dispersed on non-Ter regions of the chromosome, preventing FtsZ polymerization at these regions. This chain is Nucleoid occlusion factor SlmA, found in Mannheimia succiniciproducens (strain KCTC 0769BP / MBEL55E).